Here is an 878-residue protein sequence, read N- to C-terminus: MEHRKPGTGQRAPKDEKEMVRRAIQKELKIKEGMENMRRVATDRRHLGHVQQLLRASNRRLEQLHGELRELHAQVLLPASAEPVTSEPQPRAEQSRARLSEALHRQLQVELKVKQGAENMIHTCASGTPKERKLLAAAQQMLKDSQLKVALLRMKISSLESSGSPEPGPDLLAEELQHRLRVEAAVAAGAKNVVKLLGGQRMQDRKALAEAQAQLQESSQKLDLLRLALELLLERLPPTHSLRSRVTQELWMAMLGNPQPLGTLVKPIALTGTLQVRLLGCKDLLVAVPGRSPMAVLAGSPSESWLRTRSRQQRGGGELASEVLAVLKVDNRVVGQTGWGLVAEKSWDQSFIISLDRARELEIGVHWRDWRQLCGVAFLKLEDFLDNACHQLSLSLVPQGRLFAQVTFCEPVIERRPRLQRQRCIFSKRRGRDFMRASQMNLSMAAWGRLVMSLLPPCSSPNTASPPKGRPSTAVCGTPSAASPSNFLPMKTLSKEDTKPPPKPPRLYLQEPAPGTPCTKRPHMDPRPAVVPALAALSTRKPPRLQDFRCLAVLGRGHFGKVLLVQYKGTGKYYAIKALKKQEVLGRDEIDSLYCEKRILETVGRTGHPFLLSLLACLQTSSHACFVTEFLPGGDLMAQIHEDVFPEPQACFYLACVVLGLQFLHEKRIIYRDLKLDNLLLDAQGFLKIADFGLCKEGIGFGDRTSTFCGTPEFLAPEVLTQEAYTRAVDWWGLGVLLYEMLVGECPFPGDTEEEVFECIVSADVPCPHFLSVQGLELIQKLLQKSPEKRLGAGERDAEEIKVQPFFRTTNWQALLARTVQPPFVPTLCGPADLRYFEGEFTSLPPTLTPPVSQSSLTARQQAAFRDFDFVSEQFLES.

REM-1 domains are found at residues 2–77, 86–165, and 169–238; these read EHRK…QVLL, SEPQ…SGSP, and PDLL…RLPP. At Ser164 the chain carries Phosphoserine. The tract at residues 461–525 is disordered; sequence PNTASPPKGR…TPCTKRPHMD (65 aa). The Protein kinase domain maps to 548–807; sequence FRCLAVLGRG…AEEIKVQPFF (260 aa). Residues 554-562 and Lys577 each bind ATP; that span reads LGRGHFGKV. The Proton acceptor role is filled by Asp673. Thr707, Thr711, and Thr849 each carry phosphothreonine. Residues 808–878 enclose the AGC-kinase C-terminal domain; the sequence is RTTNWQALLA…DFVSEQFLES (71 aa).

The protein belongs to the protein kinase superfamily. AGC Ser/Thr protein kinase family. PKC subfamily. Autophosphorylated.

It localises to the nucleus. The protein localises to the cytoplasm. The protein resides in the perinuclear region. It carries out the reaction L-seryl-[protein] + ATP = O-phospho-L-seryl-[protein] + ADP + H(+). The enzyme catalyses L-threonyl-[protein] + ATP = O-phospho-L-threonyl-[protein] + ADP + H(+). Its activity is regulated as follows. Two specific sites, Thr-707 (activation loop of the kinase domain) and Thr-849 (turn motif), need to be phosphorylated for its full activation. Its function is as follows. Contributes to invasiveness in malignant prostate cancer. This chain is Serine/threonine-protein kinase N3 (Pkn3), found in Mus musculus (Mouse).